A 114-amino-acid chain; its full sequence is Eukaryotic translation initiation factor 6 (114 aa).

This sequence belongs to the eIF-6 family. Monomer. Associates with the 60S ribosomal subunit.

It is found in the cytoplasm. Its subcellular location is the nucleus. The protein localises to the nucleolus. Functionally, binds to the 60S ribosomal subunit and prevents its association with the 40S ribosomal subunit to form the 80S initiation complex in the cytoplasm. May also be involved in ribosome biogenesis. This chain is Eukaryotic translation initiation factor 6, found in Trypanosoma cruzi.